A 153-amino-acid chain; its full sequence is MSTKEIVKNVNIKNKKASFEYEFLEKYEAGIVLKGTEIKAIRMSKASISEAYCLFDNEELWIKNMNISSYDKGSFYNHDPLSARKLLLRKAELKKLFMHSKEKGLTIIALRLFTNERGYAKIEIALAKGKKLYDKRESIKSKDNEREMQRIRI.

It belongs to the SmpB family.

The protein localises to the cytoplasm. Its function is as follows. Required for rescue of stalled ribosomes mediated by trans-translation. Binds to transfer-messenger RNA (tmRNA), required for stable association of tmRNA with ribosomes. tmRNA and SmpB together mimic tRNA shape, replacing the anticodon stem-loop with SmpB. tmRNA is encoded by the ssrA gene; the 2 termini fold to resemble tRNA(Ala) and it encodes a 'tag peptide', a short internal open reading frame. During trans-translation Ala-aminoacylated tmRNA acts like a tRNA, entering the A-site of stalled ribosomes, displacing the stalled mRNA. The ribosome then switches to translate the ORF on the tmRNA; the nascent peptide is terminated with the 'tag peptide' encoded by the tmRNA and targeted for degradation. The ribosome is freed to recommence translation, which seems to be the essential function of trans-translation. The protein is SsrA-binding protein of Cytophaga hutchinsonii (strain ATCC 33406 / DSM 1761 / CIP 103989 / NBRC 15051 / NCIMB 9469 / D465).